Here is a 216-residue protein sequence, read N- to C-terminus: Cell division protein SepF (216 aa).

The segment at 22–126 (EYVEEPDQAR…PVVDDGGPLA (105 aa)) is disordered. Basic and acidic residues-rich tracts occupy residues 28–50 (DQAR…REFV), 62–80 (SRRD…RPRV), and 106–118 (ARAE…RAPV).

This sequence belongs to the SepF family. In terms of assembly, homodimer. Interacts with FtsZ.

It is found in the cytoplasm. In terms of biological role, cell division protein that is part of the divisome complex and is recruited early to the Z-ring. Probably stimulates Z-ring formation, perhaps through the cross-linking of FtsZ protofilaments. Its function overlaps with FtsA. This is Cell division protein SepF from Rhodococcus erythropolis (strain PR4 / NBRC 100887).